Reading from the N-terminus, the 528-residue chain is MSAKVPSNATFKNKEKPQEVRKANIIAARSVADAIRTSLGPKGMDKMIKTSRGEIIISNDGHTILKQMAILHPVARMLVEVSAAQDSEAGDGTTSVVILTGALLGAAERLLNKGIHPTIIADSFQSAAKRSVDILLEMCHKVSLSDREQLVRAASTSLSSKIVSQYSSFLAPLAVDSVLKISDENSKNVDLNDIRLVKKVGGTIDDTEMIDGVVLTQTAIKSAGGPTRKEKAKIGLIQFQISPPKPDTENNIIVNDYRQMDKILKEERAYLLNICKKIKKAKCNVLLIQKSILRDAVNDLALHFLSKLNIMVVKDIEREEIEFLSKGLGCKPIADIELFTEDRLGSADLVEEIDSDGSKIVRVTGIRNNNARPTVSVVIRGANNMIIDETERSLHDALCVIRCLVKERGLIAGGGAPEIEISRRLSKEARSMEGVQAFIWQEFASALEVIPTTLAENAGLNSIKVVTELRSKHENGELNDGISVRRSGTTNTYEEHILQPVLVSTSAITLASECVKSILRIDDIAFSR.

It belongs to the TCP-1 chaperonin family. In terms of assembly, heterooligomeric complex of about 850 to 900 kDa that forms two stacked rings, 12 to 16 nm in diameter.

Its subcellular location is the cytoplasm. Functionally, molecular chaperone; assists the folding of proteins upon ATP hydrolysis. Known to play a role, in vitro, in the folding of actin and tubulin. In yeast may play a role in mitotic spindle formation. In Saccharomyces cerevisiae (strain ATCC 204508 / S288c) (Baker's yeast), this protein is T-complex protein 1 subunit delta (CCT4).